A 609-amino-acid polypeptide reads, in one-letter code: Dihydroxy-acid dehydratase 1 (609 aa).

D81 contacts Mg(2+). Position 122 (C122) interacts with [2Fe-2S] cluster. Mg(2+)-binding residues include D123 and K124. At K124 the chain carries N6-carboxylysine. Residue C195 coordinates [2Fe-2S] cluster. Position 491 (E491) interacts with Mg(2+). Catalysis depends on S517, which acts as the Proton acceptor.

The protein belongs to the IlvD/Edd family. In terms of assembly, homodimer. It depends on [2Fe-2S] cluster as a cofactor. The cofactor is Mg(2+).

The enzyme catalyses (2R)-2,3-dihydroxy-3-methylbutanoate = 3-methyl-2-oxobutanoate + H2O. It catalyses the reaction (2R,3R)-2,3-dihydroxy-3-methylpentanoate = (S)-3-methyl-2-oxopentanoate + H2O. It participates in amino-acid biosynthesis; L-isoleucine biosynthesis; L-isoleucine from 2-oxobutanoate: step 3/4. Its pathway is amino-acid biosynthesis; L-valine biosynthesis; L-valine from pyruvate: step 3/4. In terms of biological role, functions in the biosynthesis of branched-chain amino acids. Catalyzes the dehydration of (2R,3R)-2,3-dihydroxy-3-methylpentanoate (2,3-dihydroxy-3-methylvalerate) into 2-oxo-3-methylpentanoate (2-oxo-3-methylvalerate) and of (2R)-2,3-dihydroxy-3-methylbutanoate (2,3-dihydroxyisovalerate) into 2-oxo-3-methylbutanoate (2-oxoisovalerate), the penultimate precursor to L-isoleucine and L-valine, respectively. The polypeptide is Dihydroxy-acid dehydratase 1 (Acinetobacter baylyi (strain ATCC 33305 / BD413 / ADP1)).